The primary structure comprises 71 residues: NAD(P)H-quinone oxidoreductase subunit O (71 aa).

Belongs to the complex I NdhO subunit family. In terms of assembly, NDH-1 can be composed of about 15 different subunits; different subcomplexes with different compositions have been identified which probably have different functions.

It is found in the cellular thylakoid membrane. The enzyme catalyses a plastoquinone + NADH + (n+1) H(+)(in) = a plastoquinol + NAD(+) + n H(+)(out). It catalyses the reaction a plastoquinone + NADPH + (n+1) H(+)(in) = a plastoquinol + NADP(+) + n H(+)(out). NDH-1 shuttles electrons from an unknown electron donor, via FMN and iron-sulfur (Fe-S) centers, to quinones in the respiratory and/or the photosynthetic chain. The immediate electron acceptor for the enzyme in this species is believed to be plastoquinone. Couples the redox reaction to proton translocation, and thus conserves the redox energy in a proton gradient. Cyanobacterial NDH-1 also plays a role in inorganic carbon-concentration. The protein is NAD(P)H-quinone oxidoreductase subunit O of Picosynechococcus sp. (strain ATCC 27264 / PCC 7002 / PR-6) (Agmenellum quadruplicatum).